The following is a 472-amino-acid chain: ATP-dependent protease ATPase subunit HslU (472 aa).

ATP-binding positions include isoleucine 20, glycine 62–glutamate 67, aspartate 285, glutamate 350, and arginine 422.

This sequence belongs to the ClpX chaperone family. HslU subfamily. As to quaternary structure, a double ring-shaped homohexamer of HslV is capped on each side by a ring-shaped HslU homohexamer. The assembly of the HslU/HslV complex is dependent on binding of ATP.

The protein localises to the cytoplasm. Its function is as follows. ATPase subunit of a proteasome-like degradation complex; this subunit has chaperone activity. The binding of ATP and its subsequent hydrolysis by HslU are essential for unfolding of protein substrates subsequently hydrolyzed by HslV. HslU recognizes the N-terminal part of its protein substrates and unfolds these before they are guided to HslV for hydrolysis. The sequence is that of ATP-dependent protease ATPase subunit HslU from Lactiplantibacillus plantarum (strain ATCC BAA-793 / NCIMB 8826 / WCFS1) (Lactobacillus plantarum).